Reading from the N-terminus, the 127-residue chain is Aspartate 1-decarboxylase (127 aa).

The active-site Schiff-base intermediate with substrate; via pyruvic acid is S25. At S25 the chain carries Pyruvic acid (Ser). T57 is a binding site for substrate. Y58 (proton donor) is an active-site residue. Residue 73–75 (GAA) participates in substrate binding.

This sequence belongs to the PanD family. Heterooctamer of four alpha and four beta subunits. Requires pyruvate as cofactor. In terms of processing, is synthesized initially as an inactive proenzyme, which is activated by self-cleavage at a specific serine bond to produce a beta-subunit with a hydroxyl group at its C-terminus and an alpha-subunit with a pyruvoyl group at its N-terminus.

The protein resides in the cytoplasm. It catalyses the reaction L-aspartate + H(+) = beta-alanine + CO2. It functions in the pathway cofactor biosynthesis; (R)-pantothenate biosynthesis; beta-alanine from L-aspartate: step 1/1. Functionally, catalyzes the pyruvoyl-dependent decarboxylation of aspartate to produce beta-alanine. The chain is Aspartate 1-decarboxylase from Bacillus cereus (strain 03BB102).